Reading from the N-terminus, the 97-residue chain is Large ribosomal subunit protein eL21 (97 aa).

Positions 1-23 are disordered; the sequence is MTKMSKGPRSGSRRVMTKSVKNK.

The protein belongs to the eukaryotic ribosomal protein eL21 family.

The sequence is that of Large ribosomal subunit protein eL21 from Picrophilus torridus (strain ATCC 700027 / DSM 9790 / JCM 10055 / NBRC 100828 / KAW 2/3).